The sequence spans 208 residues: Pyridoxine/pyridoxamine 5'-phosphate oxidase (208 aa).

FMN contacts are provided by residues 53–58, 68–69, Lys75, and Gln100; these read RTVLLK and YS. Lys58 contacts substrate. Residues Tyr118, Arg122, and Ser126 each coordinate substrate. Residues 135–136 and Trp180 contribute to the FMN site; that span reads QS. Position 186-188 (186-188) interacts with substrate; sequence RLH. Arg190 provides a ligand contact to FMN.

Belongs to the pyridoxamine 5'-phosphate oxidase family. As to quaternary structure, homodimer. The cofactor is FMN.

It catalyses the reaction pyridoxamine 5'-phosphate + O2 + H2O = pyridoxal 5'-phosphate + H2O2 + NH4(+). The enzyme catalyses pyridoxine 5'-phosphate + O2 = pyridoxal 5'-phosphate + H2O2. It functions in the pathway cofactor metabolism; pyridoxal 5'-phosphate salvage; pyridoxal 5'-phosphate from pyridoxamine 5'-phosphate: step 1/1. Its pathway is cofactor metabolism; pyridoxal 5'-phosphate salvage; pyridoxal 5'-phosphate from pyridoxine 5'-phosphate: step 1/1. Functionally, catalyzes the oxidation of either pyridoxine 5'-phosphate (PNP) or pyridoxamine 5'-phosphate (PMP) into pyridoxal 5'-phosphate (PLP). This chain is Pyridoxine/pyridoxamine 5'-phosphate oxidase, found in Xylella fastidiosa (strain Temecula1 / ATCC 700964).